The chain runs to 203 residues: Glycerol-3-phosphate acyltransferase (203 aa).

A run of 4 helical transmembrane segments spans residues 6–26 (LTLL…AVLV), 82–102 (AISL…PIFF), 118–138 (APIG…LVLI), and 141–161 (YSSL…WWLD).

The protein belongs to the PlsY family. Probably interacts with PlsX.

The protein resides in the cell inner membrane. It catalyses the reaction an acyl phosphate + sn-glycerol 3-phosphate = a 1-acyl-sn-glycero-3-phosphate + phosphate. The protein operates within lipid metabolism; phospholipid metabolism. In terms of biological role, catalyzes the transfer of an acyl group from acyl-phosphate (acyl-PO(4)) to glycerol-3-phosphate (G3P) to form lysophosphatidic acid (LPA). This enzyme utilizes acyl-phosphate as fatty acyl donor, but not acyl-CoA or acyl-ACP. In Shewanella sp. (strain ANA-3), this protein is Glycerol-3-phosphate acyltransferase.